A 506-amino-acid polypeptide reads, in one-letter code: Protein P7 (506 aa).

RNA-binding stretches follow at residues 128–249 (ISYL…GKRE) and 325–355 (DGSY…FKIS).

The protein belongs to the phytoreovirus protein P7 family.

It localises to the virion. Its subcellular location is the host cytoplasm. Probable component of the transcriptional machinery present in the inner capsid. Displays dsRNA binding activity and may play an important role in the sorting of viral RNA and virion assembly. Together with the RNA-directed RNA polymerase P1 and capping enzyme P5, forms an transcriptional complex positioned near the channels situated at each of the five-fold vertices of the core. The protein is Protein P7 of Alopecurus aequalis (Barnyard grass).